Consider the following 310-residue polypeptide: Malate dehydrogenase (310 aa).

NAD(+)-binding positions include 7–12 and D32; that span reads GAGNVG. Positions 81 and 87 each coordinate substrate. NAD(+) is bound by residues N94 and 117-119; that span reads VSN. Substrate-binding residues include N119 and R150. Residue H174 is the Proton acceptor of the active site.

The protein belongs to the LDH/MDH superfamily. MDH type 3 family.

The enzyme catalyses (S)-malate + NAD(+) = oxaloacetate + NADH + H(+). In terms of biological role, catalyzes the reversible oxidation of malate to oxaloacetate. The sequence is that of Malate dehydrogenase from Chloroherpeton thalassium (strain ATCC 35110 / GB-78).